The primary structure comprises 124 residues: Small ribosomal subunit protein uS12 (124 aa).

At aspartate 89 the chain carries 3-methylthioaspartic acid. Residues 105-124 form a disordered region; sequence QGVKNRGQARSRYGAKKEKK. The span at 111–124 shows a compositional bias: basic residues; it reads GQARSRYGAKKEKK.

The protein belongs to the universal ribosomal protein uS12 family. Part of the 30S ribosomal subunit. Contacts proteins S8 and S17. May interact with IF1 in the 30S initiation complex.

With S4 and S5 plays an important role in translational accuracy. Functionally, interacts with and stabilizes bases of the 16S rRNA that are involved in tRNA selection in the A site and with the mRNA backbone. Located at the interface of the 30S and 50S subunits, it traverses the body of the 30S subunit contacting proteins on the other side and probably holding the rRNA structure together. The combined cluster of proteins S8, S12 and S17 appears to hold together the shoulder and platform of the 30S subunit. This is Small ribosomal subunit protein uS12 from Micrococcus luteus (Micrococcus lysodeikticus).